Reading from the N-terminus, the 201-residue chain is MDGLRQRFERFLEQKNVATEALGALEARTGVEKRYLAAGALALLGLYLLFGYGASLLCNVIGFVYPAYASVKAIESPSKEDDTVWLTYWVVYALFGLVEFFSDLLLFWFPFYYAGKCAFLLFCMTPGPWNGALLLYHRVIRPLFLKHHMALDSAASQLSGRALDLAAGITRDVLQALARGRALVTPASTSEPPAALELDPK.

A run of 3 helical transmembrane segments spans residues 36–56 (LAAG…GASL), 89–109 (WVVY…LFWF), and 117–137 (CAFL…LLYH).

This sequence belongs to the DP1 family. Interacts with STX3. Interacts with clathrin. Expressed in the inner segment of rod photoreceptors and outer plexiform layer of the retina (at protein level). Expressed in liver, but not detected in brain, muscle, kidney, retinal cone photoreceptors or retinal ganglion cells (at protein level). Highly expressed in the ganglion cell layer of the retina and in liver, and also detected at low levels in kidney and testis. Isoform 1: Expressed in the retina. Isoform 2: Expressed in liver.

It localises to the endoplasmic reticulum membrane. The protein resides in the cytoplasmic vesicle. Its subcellular location is the clathrin-coated vesicle membrane. Required for correct function and survival of retinal photoreceptors. Required for retinal development. In rod photoreceptors, facilitates stability and/or trafficking of guanylate cyclases and is required to maintain endoplasmic reticulum and mitochondrial homeostasis. May play a role in clathrin-coated intracellular vesicle trafficking of proteins from the endoplasmic reticulum to the retinal rod plasma membrane. The protein is Receptor expression-enhancing protein 6 (Reep6) of Mus musculus (Mouse).